A 321-amino-acid polypeptide reads, in one-letter code: Beta-1,3-N-acetylglucosaminyltransferase manic fringe (321 aa).

At 1–7 the chain is on the cytoplasmic side; sequence MQCRLPR. The helical; Signal-anchor for type II membrane protein transmembrane segment at 8–27 threads the bilayer; the sequence is GLAGALLTLLCMGLLCLRYH. Residues 28–321 are Lumenal-facing; that stretch reads LNLSPQRVQE…TPWCPQLGAR (294 aa). Substrate is bound at residue Arg70. Asn109 is a glycosylation site (N-linked (GlcNAc...) asparagine). 2 disulfide bridges follow: Cys110-Cys121 and Cys139-Cys202. Asp143 contributes to the substrate binding site. Asp144 is a binding site for Mn(2+). N-linked (GlcNAc...) asparagine glycosylation occurs at Asn185. The active site involves Asp232. A Mn(2+)-binding site is contributed by His256. A disulfide bridge links Cys306 with Cys315.

The protein belongs to the glycosyltransferase 31 family. Mn(2+) is required as a cofactor.

Its subcellular location is the golgi apparatus membrane. The enzyme catalyses 3-O-(alpha-L-fucosyl)-L-threonyl-[EGF-like domain protein] + UDP-N-acetyl-alpha-D-glucosamine = 3-O-(N-acetyl-beta-D-glucosaminyl-(1-&gt;3)-alpha-L-fucosyl)-L-threonyl-[EGF-like domain protein] + UDP + H(+). It carries out the reaction 3-O-(alpha-L-fucosyl)-L-seryl-[EGF-like domain protein] + UDP-N-acetyl-alpha-D-glucosamine = 3-O-(N-acetyl-beta-D-glucosaminyl-(1-&gt;3)-alpha-L-fucosyl)-L-seryl-[EGF-like domain protein] + UDP + H(+). Its function is as follows. Glycosyltransferase that initiates the elongation of O-linked fucose residues attached to EGF-like repeats in the extracellular domain of Notch molecules. Modulates NOTCH1 activity by modifying O-fucose residues at specific EGF-like domains resulting in inhibition of NOTCH1 activation by JAG1 and enhancement of NOTCH1 activation by DLL1 via an increase in its binding to DLL1. The protein is Beta-1,3-N-acetylglucosaminyltransferase manic fringe (MFNG) of Pan troglodytes (Chimpanzee).